We begin with the raw amino-acid sequence, 336 residues long: Poly(A) RNA polymerase cid12 (336 aa).

2 residues coordinate Mg(2+): Asp-77 and Asp-79. Positions 209–263 (ALLQKFFYFWGVEWTYELFVLRPLTGQIVPKLQKGWLNEVQPNLLSIEDPIDRNN) constitute a PAP-associated domain. Position 325 is a phosphoserine (Ser-325). Thr-327 bears the Phosphothreonine mark. Ser-329 is subject to Phosphoserine.

Belongs to the DNA polymerase type-B-like family. As to quaternary structure, cid12, hrr1 and rdp1 interact forming the RNA-directed RNA polymerase complex (RDRC). The RDRC complex interacts with the RITS complex via interaction between ago1 and hrr1. Clr4 has a role in mediating this interaction. Mg(2+) is required as a cofactor. It depends on Mn(2+) as a cofactor.

Its subcellular location is the cytoplasm. It localises to the nucleus. It carries out the reaction RNA(n) + ATP = RNA(n)-3'-adenine ribonucleotide + diphosphate. In terms of biological role, has a role in the RNA interference (RNAi) pathway which is important for heterochromatin formation and accurate chromosome segregation. A member of the RNA-directed RNA polymerase complex (RDRC) which is involved in the generation of small interfering RNAs (siRNAs) and mediate their association with the RNA-induced transcriptional silencing (RITS) complex. RITS acts as a priming complex for dsRNA synthesis at the site of non-coding centromeric RNA. This Schizosaccharomyces pombe (strain 972 / ATCC 24843) (Fission yeast) protein is Poly(A) RNA polymerase cid12 (cid12).